The primary structure comprises 638 residues: 1-deoxy-D-xylulose-5-phosphate synthase (638 aa).

Thiamine diphosphate contacts are provided by residues His79 and 120 to 122 (AHS). Residue Asp151 coordinates Mg(2+). Thiamine diphosphate contacts are provided by residues 152 to 153 (GA), Asn180, Tyr289, and Glu371. Asn180 serves as a coordination point for Mg(2+).

This sequence belongs to the transketolase family. DXPS subfamily. Homodimer. Mg(2+) is required as a cofactor. Requires thiamine diphosphate as cofactor.

It catalyses the reaction D-glyceraldehyde 3-phosphate + pyruvate + H(+) = 1-deoxy-D-xylulose 5-phosphate + CO2. The protein operates within metabolic intermediate biosynthesis; 1-deoxy-D-xylulose 5-phosphate biosynthesis; 1-deoxy-D-xylulose 5-phosphate from D-glyceraldehyde 3-phosphate and pyruvate: step 1/1. In terms of biological role, catalyzes the acyloin condensation reaction between C atoms 2 and 3 of pyruvate and glyceraldehyde 3-phosphate to yield 1-deoxy-D-xylulose-5-phosphate (DXP). This is 1-deoxy-D-xylulose-5-phosphate synthase from Rhizobium johnstonii (strain DSM 114642 / LMG 32736 / 3841) (Rhizobium leguminosarum bv. viciae).